The sequence spans 295 residues: Shikimate dehydrogenase (NADP(+)) (295 aa).

Shikimate is bound by residues 24–26 (SRS) and threonine 71. Residue lysine 75 is the Proton acceptor of the active site. Glutamate 87 is a binding site for NADP(+). Shikimate is bound by residues asparagine 96 and aspartate 111. Residues 136-140 (GAGGA), 160-165 (NRTASR), and methionine 233 contribute to the NADP(+) site. A shikimate-binding site is contributed by tyrosine 235. Glycine 256 provides a ligand contact to NADP(+).

The protein belongs to the shikimate dehydrogenase family. As to quaternary structure, homodimer.

It carries out the reaction shikimate + NADP(+) = 3-dehydroshikimate + NADPH + H(+). It participates in metabolic intermediate biosynthesis; chorismate biosynthesis; chorismate from D-erythrose 4-phosphate and phosphoenolpyruvate: step 4/7. Functionally, involved in the biosynthesis of the chorismate, which leads to the biosynthesis of aromatic amino acids. Catalyzes the reversible NADPH linked reduction of 3-dehydroshikimate (DHSA) to yield shikimate (SA). In Cupriavidus necator (strain ATCC 17699 / DSM 428 / KCTC 22496 / NCIMB 10442 / H16 / Stanier 337) (Ralstonia eutropha), this protein is Shikimate dehydrogenase (NADP(+)).